Here is a 293-residue protein sequence, read N- to C-terminus: MTNQQDYTQDNDKLYRYLFQHRAVRGEWVRLNKTFTDTLNTHQYPKAVQDLLGEMMVATNLLTATLKFAGNITVQIQGDGPLRLALVNGNDQQQIRALARVDGNITENMSLHNMIGKGVLVITIAPKEGERYQGVISLDKPTITECLEDYFVRSEQLQTQLIIRTGEYEGKPVAAGMLLQIMPDGSGTPEDFEHLTTLAATVKDEELFGLPAEELLYRLYHEETVNLYPAQDVQFFCGCSAERSSSALLLISDEEIDEILAEHKGRIDMQCECCGTHYFFNKEAIEKLKSTRV.

2 cysteine pairs are disulfide-bonded: cysteine 237–cysteine 239 and cysteine 271–cysteine 274.

It belongs to the HSP33 family. In terms of processing, under oxidizing conditions two disulfide bonds are formed involving the reactive cysteines. Under reducing conditions zinc is bound to the reactive cysteines and the protein is inactive.

It is found in the cytoplasm. Functionally, redox regulated molecular chaperone. Protects both thermally unfolding and oxidatively damaged proteins from irreversible aggregation. Plays an important role in the bacterial defense system toward oxidative stress. This chain is 33 kDa chaperonin, found in Haemophilus influenzae (strain ATCC 51907 / DSM 11121 / KW20 / Rd).